A 75-amino-acid chain; its full sequence is MSGCNCGSSCNCGDSCKCNKRSSGLSYSEVETKETVILGVGPAKIQFEGAEMSFASKEGGCKCGDNCTCDPCNCK.

Belongs to the metallothionein superfamily. Type 15 family.

Functionally, metallothioneins have a high content of cysteine residues that bind various heavy metals. This is Metallothionein-like protein 1B (MT1B) from Vicia faba (Broad bean).